A 493-amino-acid chain; its full sequence is Cysteine sulfinic acid decarboxylase (493 aa).

An N6-(pyridoxal phosphate)lysine modification is found at Lys305.

This sequence belongs to the group II decarboxylase family. As to quaternary structure, homodimer. Pyridoxal 5'-phosphate is required as a cofactor. Expressed in kidney and liver not detected in lymphoid tissues and lung. Expressed in kidney, liver and brain. 7 and 4 times higher expression in kidney and liver than in brain, respectively. Low level of detection in skeletal muscle. Expressed in brain, olfactory bulb, liver, skeletal muscle and kidney with the highest expression in liver and lowest in skeletal muscle (at protein level).

It catalyses the reaction L-aspartate + H(+) = beta-alanine + CO2. It carries out the reaction 3-sulfino-L-alanine + H(+) = hypotaurine + CO2. The catalysed reaction is L-cysteate + H(+) = taurine + CO2. It participates in organosulfur biosynthesis; taurine biosynthesis; hypotaurine from L-cysteine: step 2/2. With respect to regulation, activated by Mn(2+). Inhibited by bis-carboxymethyl-trithiocarbonate, ethylxanthogenacetic acid and 2,5-disulfoaniline. Not affected by Li(+) within 0.05-40 mM concentration range. In terms of biological role, catalyzes the decarboxylation of L-aspartate, 3-sulfino-L-alanine (cysteine sulfinic acid), and L-cysteate to beta-alanine, hypotaurine and taurine, respectively. The preferred substrate is 3-sulfino-L-alanine. Does not exhibit any decarboxylation activity toward glutamate. This Mus musculus (Mouse) protein is Cysteine sulfinic acid decarboxylase.